We begin with the raw amino-acid sequence, 423 residues long: Probable efflux pump mfs2 (423 aa).

Helical transmembrane passes span 21 to 41, 49 to 69, 79 to 99, 111 to 131, 138 to 158, 220 to 240, 256 to 278, 295 to 315, 319 to 339, 360 to 380, and 392 to 411; these read TMAL…IGPV, SIFH…GFAH, LLAG…LGDV, LYLL…GFIV, WMFW…LLFH, AILE…FSAL, YIVI…DYAY, IPLL…YGWA, HLIW…MQIF, AATQ…SNSL, and LLAF…LWRW.

This sequence belongs to the major facilitator superfamily.

Its subcellular location is the membrane. Probable efflux pump; part of the gene cluster 27 that mediates the biosynthesis of asparasone A, a sclerotium-specific anthraquinone pigment important for sclerotial survival. The protein is Probable efflux pump mfs2 of Aspergillus flavus (strain ATCC 200026 / FGSC A1120 / IAM 13836 / NRRL 3357 / JCM 12722 / SRRC 167).